Reading from the N-terminus, the 108-residue chain is Cytochrome c (108 aa).

Heme c contacts are provided by cysteine 19, cysteine 22, histidine 23, and methionine 85.

The protein belongs to the cytochrome c family. In terms of processing, binds 1 heme c group covalently per subunit.

The protein localises to the mitochondrion intermembrane space. Functionally, electron carrier protein. The oxidized form of the cytochrome c heme group can accept an electron from the heme group of the cytochrome c1 subunit of cytochrome reductase. Cytochrome c then transfers this electron to the cytochrome oxidase complex, the final protein carrier in the mitochondrial electron-transport chain. The sequence is that of Cytochrome c from Cochliobolus lunatus (Filamentous fungus).